Consider the following 247-residue polypeptide: Orotidine 5'-phosphate decarboxylase (247 aa).

Substrate is bound by residues Asp22, Lys44, 71 to 80 (DLKFHDIPNT), Thr131, Arg192, Gln201, Gly221, and Arg222. Catalysis depends on Lys73, which acts as the Proton donor.

This sequence belongs to the OMP decarboxylase family. Type 1 subfamily. Homodimer.

The enzyme catalyses orotidine 5'-phosphate + H(+) = UMP + CO2. Its pathway is pyrimidine metabolism; UMP biosynthesis via de novo pathway; UMP from orotate: step 2/2. Catalyzes the decarboxylation of orotidine 5'-monophosphate (OMP) to uridine 5'-monophosphate (UMP). This Pectobacterium carotovorum subsp. carotovorum (strain PC1) protein is Orotidine 5'-phosphate decarboxylase.